Consider the following 301-residue polypeptide: ATP synthase gamma chain (301 aa).

It belongs to the ATPase gamma chain family. F-type ATPases have 2 components, CF(1) - the catalytic core - and CF(0) - the membrane proton channel. CF(1) has five subunits: alpha(3), beta(3), gamma(1), delta(1), epsilon(1). CF(0) has three main subunits: a, b and c.

It localises to the cell inner membrane. In terms of biological role, produces ATP from ADP in the presence of a proton gradient across the membrane. The gamma chain is believed to be important in regulating ATPase activity and the flow of protons through the CF(0) complex. This is ATP synthase gamma chain from Helicobacter pylori (strain P12).